The sequence spans 375 residues: DNA replication and repair protein RecF (375 aa).

30–37 lines the ATP pocket; it reads GNNGSGKS.

It belongs to the RecF family.

Its subcellular location is the cytoplasm. Functionally, the RecF protein is involved in DNA metabolism; it is required for DNA replication and normal SOS inducibility. RecF binds preferentially to single-stranded, linear DNA. It also seems to bind ATP. In Hahella chejuensis (strain KCTC 2396), this protein is DNA replication and repair protein RecF.